A 512-amino-acid chain; its full sequence is ATP synthase subunit alpha (512 aa).

169 to 176 lines the ATP pocket; it reads GDRQTGKT.

This sequence belongs to the ATPase alpha/beta chains family. F-type ATPases have 2 components, CF(1) - the catalytic core - and CF(0) - the membrane proton channel. CF(1) has five subunits: alpha(3), beta(3), gamma(1), delta(1), epsilon(1). CF(0) has four main subunits: a(1), b(1), b'(1) and c(9-12).

The protein localises to the cell inner membrane. The catalysed reaction is ATP + H2O + 4 H(+)(in) = ADP + phosphate + 5 H(+)(out). Produces ATP from ADP in the presence of a proton gradient across the membrane. The alpha chain is a regulatory subunit. The protein is ATP synthase subunit alpha of Jannaschia sp. (strain CCS1).